We begin with the raw amino-acid sequence, 116 residues long: Large ribosomal subunit protein bL19 (116 aa).

It belongs to the bacterial ribosomal protein bL19 family.

Functionally, this protein is located at the 30S-50S ribosomal subunit interface and may play a role in the structure and function of the aminoacyl-tRNA binding site. In Clostridium botulinum (strain Eklund 17B / Type B), this protein is Large ribosomal subunit protein bL19.